A 128-amino-acid chain; its full sequence is Probable 4-amino-4-deoxy-L-arabinose-phosphoundecaprenol flippase subunit ArnF (128 aa).

Residues 1–10 lie on the Cytoplasmic side of the membrane; that stretch reads MKGYLWGGAS. Residues 11–31 traverse the membrane as a helical segment; that stretch reads VVLVTVAQLVLKWGMMNIPLL. Residues 32-47 lie on the Periplasmic side of the membrane; that stretch reads SLADINVQFLTMYFVQ. The helical transmembrane segment at 48–68 threads the bilayer; the sequence is LASVMCGLMGYALSMLCWFFA. The Cytoplasmic segment spans residues 69 to 77; sequence LRYLPLNRA. The helical transmembrane segment at 78 to 98 threads the bilayer; it reads YPLLSLSYALVYLGAVLLPWF. Residues 99 to 101 are Periplasmic-facing; the sequence is NEP. A helical membrane pass occupies residues 102–122; sequence ATLLKTLGAGFILLGIWLINI. Residues 123-128 lie on the Cytoplasmic side of the membrane; it reads KPIKAS.

The protein belongs to the ArnF family. As to quaternary structure, heterodimer of ArnE and ArnF.

Its subcellular location is the cell inner membrane. Its pathway is bacterial outer membrane biogenesis; lipopolysaccharide biosynthesis. In terms of biological role, translocates 4-amino-4-deoxy-L-arabinose-phosphoundecaprenol (alpha-L-Ara4N-phosphoundecaprenol) from the cytoplasmic to the periplasmic side of the inner membrane. The sequence is that of Probable 4-amino-4-deoxy-L-arabinose-phosphoundecaprenol flippase subunit ArnF from Yersinia pseudotuberculosis serotype O:1b (strain IP 31758).